The primary structure comprises 389 residues: Alpha-(1,3)-fucosyltransferase 7 (389 aa).

Topologically, residues methionine 1–proline 55 are cytoplasmic. Residues threonine 56–tryptophan 78 traverse the membrane as a helical; Signal-anchor for type II membrane protein segment. Residues leucine 79–alanine 389 lie on the Lumenal side of the membrane. Cysteine 115 and cysteine 123 are disulfide-bonded. Asparagine 128 carries an N-linked (GlcNAc...) asparagine glycan. A disulfide bridge links cysteine 258 with cysteine 261. An N-linked (GlcNAc...) asparagine glycan is attached at asparagine 338. Cysteine 365 and cysteine 368 are oxidised to a cystine.

The protein belongs to the glycosyltransferase 10 family. In terms of processing, N-glycosylated. In terms of tissue distribution, highly expressed in lung and bone marrow and to a much lesser extent in spleen, salivary gland and skeletal muscle.

It is found in the golgi apparatus. It localises to the golgi stack membrane. The catalysed reaction is an N-acetyl-alpha-neuraminyl-(2-&gt;3)-beta-D-galactosyl-(1-&gt;4)-N-acetyl-beta-D-glucosaminyl derivative + GDP-beta-L-fucose = an alpha-Neu5Ac-(2-&gt;3)-beta-D-Gal-(1-&gt;4)-[alpha-L-Fuc-(1-&gt;3)]-beta-D-GlcNAc derivative + GDP + H(+). It catalyses the reaction an alpha-Neu5Ac-(2-&gt;3)-beta-D-Gal-(1-&gt;4)-beta-D-GlcNAc6S derivative + GDP-beta-L-fucose = an alpha-Neu5Ac-(2-&gt;3)-beta-D-Gal-(1-&gt;4)-[alpha-L-Fuc-(1-&gt;3)]-beta-D-GlcNAc6S derivative + GDP + H(+). It carries out the reaction a neolactoside IV(3)-alpha-NeuAc-nLc4Cer + GDP-beta-L-fucose = a neolactoside IV(3)-alpha-NeuNAc,III(3)-alpha-Fuc-nLc4Cer + GDP + H(+). The enzyme catalyses a neolactoside VI(3)-alpha-NeuNAc-nLc6Cer + GDP-beta-L-fucose = a neolactoside VI(3)-alpha-NeuAc,V(3)-alphaFuc-nLc6Cer + GDP + H(+). The catalysed reaction is an alpha-Neu5Ac-(2-&gt;3)-beta-D-Gal-(1-&gt;4)-beta-D-GlcNAc-(1-&gt;3)-beta-D-Gal-(1-&gt;4)-[alpha-L-Fuc-(1-&gt;3)]-beta-D-GlcNAc derivative + GDP-beta-L-fucose = an alpha-Neu5Ac-(2-&gt;3)-beta-D-Gal-(1-&gt;4)-[alpha-L-Fuc-(1-&gt;3)]-beta-D-GlcNAc-(1-&gt;3)-beta-D-Gal-(1-&gt;4)-[alpha-L-Fuc-(1-&gt;3)]-beta-D-GlcNAc derivative + GDP + H(+). It catalyses the reaction alpha-Neu5Ac-(2-&gt;3)-beta-D-Gal-(1-&gt;4)-beta-D-GlcNAc-(1-&gt;3)-beta-D-Gal-(1-&gt;4)-D-Glc + GDP-beta-L-fucose = alpha-Neu5Ac-(2-&gt;3)-beta-D-Gal-(1-&gt;4)-[alpha-L-Fuc-(1-&gt;3)]-beta-D-GlcNAc-(1-&gt;3)-beta-D-Gal-(1-&gt;4)-D-Glc + GDP + H(+). It carries out the reaction alpha-Neu5Ac-(2-&gt;3)-beta-D-Gal-(1-&gt;4)-beta-D-GlcNAc-(1-&gt;3)-beta-D-Gal-(1-&gt;4)-[alpha-L-Fuc-(1-&gt;3)]-beta-D-GlcNAc-(1-&gt;3)-beta-D-Gal-(1-&gt;4)-beta-D-GlcNAc + GDP-beta-L-fucose = alpha-Neu5Ac-(2-&gt;3)-beta-D-Gal-(1-&gt;4)-[alpha-L-Fuc-(1-&gt;3)]-beta-D-GlcNAc-(1-&gt;3)-beta-D-Gal-(1-&gt;4)-[alpha-L-Fuc-(1-&gt;3)]-beta-D-GlcNAc-(1-&gt;3)-beta-D-Gal-(1-&gt;4)-beta-D-GlcNAc + GDP + H(+). The enzyme catalyses alpha-Neu5Ac-(2-&gt;3)-beta-D-Gal-(1-&gt;4)-beta-D-GlcNAc-(1-&gt;3)-beta-D-Gal-(1-&gt;4)-beta-D-GlcNAc-(1-&gt;3)-beta-D-Gal-(1-&gt;4)-beta-D-GlcNAc + GDP-beta-L-fucose = alpha-Neu5Ac-(2-&gt;3)-beta-D-Gal-(1-&gt;4)-[alpha-L-Fuc-(1-&gt;3)]-beta-D-GlcNAc-(1-&gt;3)-beta-D-Gal-(1-&gt;4)-beta-D-GlcNAc-(1-&gt;3)-beta-D-Gal-(1-&gt;4)-beta-D-GlcNAc + GDP + H(+). It participates in protein modification; protein glycosylation. Its activity is regulated as follows. Inhibited by NaCl. Inhibited by GDP in a concentration dependent manner, with an IC(50) value of 93 uM. Also inhibited by GMP and GTP. Inhibited by N-ethylmaleimide. Activated by poly(ethylene glycol) by enhancing the thermal stability of FUT7. Activated by Mn2+, Ca2+, and Mg2+. Both panosialin A and B inhibit activity with IC(50) values of 4.8 and 5.3 ug/ml, respectively. Inhibited by gallic acid (GA) and (-)-epigallocatechin gallate (EGCG) in a time-dependent and irreversible manner with IC(50) values of 60 and 700 nM, respectively. In terms of biological role, catalyzes the transfer of L-fucose, from a guanosine diphosphate-beta-L-fucose, to the N-acetyl glucosamine (GlcNAc) of a distal alpha2,3 sialylated lactosamine unit of a glycoprotein or a glycolipid-linked sialopolylactosamines chain through an alpha-1,3 glycosidic linkage and participates in the final fucosylation step in the biosynthesis of the sialyl Lewis X (sLe(x)), a carbohydrate involved in cell and matrix adhesion during leukocyte trafficking and fertilization. In vitro, also synthesizes sialyl-dimeric-Lex structures, from VIM-2 structures and both di-fucosylated and trifucosylated structures from mono-fucosylated precursors. However does not catalyze alpha 1-3 fucosylation when an internal alpha 1-3 fucosylation is present in polylactosamine chain and the fucosylation rate of the internal GlcNAc residues is reduced once fucose has been added to the distal GlcNAc. Also catalyzes the transfer of a fucose from GDP-beta-fucose to the 6-sulfated a(2,3)sialylated substrate to produce 6-sulfo sLex mediating significant L-selectin-dependent cell adhesion. Through sialyl-Lewis(x) biosynthesis, can control SELE- and SELP-mediated cell adhesion with leukocytes and allows leukocytes tethering and rolling along the endothelial tissue thereby enabling the leukocytes to accumulate at a site of inflammation. May enhance embryo implantation through sialyl Lewis X (sLeX)-mediated adhesion of embryo cells to endometrium. May affect insulin signaling by up-regulating the phosphorylation and expression of some signaling molecules involved in the insulin-signaling pathway through SLe(x) which is present on the glycans of the INSRR alpha subunit. The protein is Alpha-(1,3)-fucosyltransferase 7 of Mus musculus (Mouse).